We begin with the raw amino-acid sequence, 174 residues long: uncharacterized protein (174 aa).

A disordered region spans residues Thr-137–Glu-174.

This is an uncharacterized protein from Acanthamoeba polyphaga (Amoeba).